Here is a 970-residue protein sequence, read N- to C-terminus: Type III restriction-modification enzyme EcoPI Res subunit (970 aa).

The interval 75 to 540 (ARSNVIDVSM…EVGRGLRLPV (466 aa)) is helicase-like domain. The segment at 894-918 (TYSPDFAYVVKTAEGDYLNFIIETK) is endonuclease domain.

Belongs to the type III restriction-modification system Res protein family. As to quaternary structure, a heterotetramer with stoichiometry Res(2)Mod(2). Requires Mg(2+) as cofactor. It depends on S-adenosyl-L-methionine as a cofactor.

It carries out the reaction Endonucleolytic cleavage of DNA to give specific double-stranded fragments with terminal 5'-phosphates.. A type III restriction enzyme that recognizes 2 inversely oriented double-stranded sequences 5'-AGACC-3' and cleaves DNA 25-27 base pairs downstream of one site, producing a single-strand 5' protrusion of two nucleotides. DNA restriction requires both the Res and Mod subunits. DNA topology affects its action; relaxed and negatively supercoiled DNA are digested but positively supercoiled DNA is not a good substrate. After binding to one recognition site undergoes random one-dimensional diffusion along DNA until it collides with a stationary enzyme bound to the second DNA site, which is when DNA cleavage occurs. This Enterobacteriaceae (Bacteriophage P1) protein is Type III restriction-modification enzyme EcoPI Res subunit.